The chain runs to 278 residues: Small ribosomal subunit protein uS3 (278 aa).

Residues 38 to 106 form the KH type-2 domain; the sequence is IRKLLSKGME…QVQLNILEVK (69 aa). The disordered stretch occupies residues 213 to 278; the sequence is RQAQAAARAG…APAPAENQEG (66 aa). Over residues 214–223 the composition is skewed to low complexity; it reads QAQAAARAGV. Residues 232 to 253 show a composition bias toward basic and acidic residues; the sequence is RGGERPSRGSRGDRPTRADRGG. Positions 259-278 are enriched in low complexity; the sequence is EATGAATEQAAPAPAENQEG.

It belongs to the universal ribosomal protein uS3 family. As to quaternary structure, part of the 30S ribosomal subunit. Forms a tight complex with proteins S10 and S14.

Functionally, binds the lower part of the 30S subunit head. Binds mRNA in the 70S ribosome, positioning it for translation. In Nocardioides sp. (strain ATCC BAA-499 / JS614), this protein is Small ribosomal subunit protein uS3.